Consider the following 213-residue polypeptide: Agglutinin isolectin 2 (213 aa).

The N-terminal stretch at 1-27 (MRKMMSTMALTLGAAVFLAFAAATAQA) is a signal peptide. At glutamine 28 the chain carries Pyrrolidone carboxylic acid. Chitin-binding type-1 domains follow at residues 28–69 (QRCG…ACWT), 70–112 (SKRC…PCRA), 113–155 (DIKC…ACST), and 156–198 (DKPC…GCDA). Disulfide bonds link cysteine 30–cysteine 45, cysteine 39–cysteine 51, cysteine 44–cysteine 58, cysteine 62–cysteine 67, cysteine 73–cysteine 88, cysteine 82–cysteine 94, cysteine 87–cysteine 101, cysteine 105–cysteine 110, cysteine 116–cysteine 131, cysteine 125–cysteine 137, cysteine 130–cysteine 144, cysteine 148–cysteine 153, cysteine 159–cysteine 174, cysteine 168–cysteine 180, cysteine 173–cysteine 187, and cysteine 191–cysteine 196. Residue 37–39 (MEC) participates in substrate binding. 89 to 100 (SQYGHCGFGAEY) is a binding site for substrate. Substrate is bound at residue 141-142 (SE). A propeptide spanning residues 199 to 213 (VFAGAITANSTLLAE) is cleaved from the precursor.

In terms of assembly, homodimer, u-shaped.

In terms of biological role, N-acetyl-D-glucosamine / N-acetyl-D-neuraminic acid binding lectin. The chain is Agglutinin isolectin 2 from Triticum aestivum (Wheat).